Consider the following 670-residue polypeptide: Probable Na(+)/H(+) antiporter nhx-3 (670 aa).

The next 8 membrane-spanning stretches (helical) occupy residues 41-61 (VYVI…FNLM), 73-93 (LLII…LSGV), 97-117 (SHAF…YFMP), 129-149 (LVFS…SLLI), 164-184 (EILV…IAIF), 192-212 (FLFI…VVLY), 235-255 (GLSF…FAIA), and 268-288 (ILAP…AEMV). A glycan (N-linked (GlcNAc...) asparagine) is linked at N310. A run of 4 helical transmembrane segments spans residues 325–345 (MLAQ…TLTS), 351–371 (FIFI…GIIV), 390–410 (FILS…VSIP), and 418–438 (MFIT…GITI). The disordered stretch occupies residues 648 to 670 (GDLKGHCGTSRKPKHSMFELRHV).

This sequence belongs to the monovalent cation:proton antiporter 1 (CPA1) transporter (TC 2.A.36) family. Phosphorylated. As to expression, expressed in hypodermal cells of the main body syncytium, ut1 cells of the vulva and the spermathecal junction cell.

It is found in the endomembrane system. Functionally, plays a role in epithelial membrane transport processes. This Caenorhabditis elegans protein is Probable Na(+)/H(+) antiporter nhx-3 (nhx-3).